The sequence spans 260 residues: Large ribosomal subunit protein uL2 (260 aa).

The interval 208-230 (EHPHGGGNHQHIGHPSTVRRDAS) is disordered.

The protein belongs to the universal ribosomal protein uL2 family.

It localises to the cytoplasm. This Caenorhabditis elegans protein is Large ribosomal subunit protein uL2.